Consider the following 209-residue polypeptide: Uracil phosphoribosyltransferase (209 aa).

5-phospho-alpha-D-ribose 1-diphosphate contacts are provided by residues arginine 79, arginine 104, and 131-139 (DPMLATGGS). Uracil contacts are provided by residues isoleucine 194 and 199–201 (GDA). 5-phospho-alpha-D-ribose 1-diphosphate is bound at residue aspartate 200.

It belongs to the UPRTase family. It depends on Mg(2+) as a cofactor.

The catalysed reaction is UMP + diphosphate = 5-phospho-alpha-D-ribose 1-diphosphate + uracil. It functions in the pathway pyrimidine metabolism; UMP biosynthesis via salvage pathway; UMP from uracil: step 1/1. Allosterically activated by GTP. Catalyzes the conversion of uracil and 5-phospho-alpha-D-ribose 1-diphosphate (PRPP) to UMP and diphosphate. This Geobacter sulfurreducens (strain ATCC 51573 / DSM 12127 / PCA) protein is Uracil phosphoribosyltransferase.